The primary structure comprises 204 residues: Signal peptidase I (204 aa).

The Cytoplasmic portion of the chain corresponds to 1–10; the sequence is MNLFKNFLKE. A helical transmembrane segment spans residues 11 to 30; that stretch reads WGLFLLILSLLALSRIFFWS. Topologically, residues 31 to 204 are extracellular; that stretch reads NVRVEGHSMD…FWPITRIGTF (174 aa). Active-site residues include S38 and K76.

The protein belongs to the peptidase S26 family.

The protein localises to the cell membrane. It catalyses the reaction Cleavage of hydrophobic, N-terminal signal or leader sequences from secreted and periplasmic proteins.. The chain is Signal peptidase I (lepB) from Streptococcus pneumoniae (strain ATCC BAA-255 / R6).